A 433-amino-acid polypeptide reads, in one-letter code: Enolase (433 aa).

Glutamine 167 is a binding site for (2R)-2-phosphoglycerate. Glutamate 209 acts as the Proton donor in catalysis. Aspartate 246 contacts Mg(2+). The short motif at 252–260 (FYDAEKKEY) is the Plasminogen-binding motif element. Mg(2+) contacts are provided by glutamate 291 and aspartate 318. 4 residues coordinate (2R)-2-phosphoglycerate: lysine 343, arginine 372, serine 373, and lysine 394. The Proton acceptor role is filled by lysine 343.

This sequence belongs to the enolase family. In terms of assembly, component of the RNA degradosome, a multiprotein complex involved in RNA processing and mRNA degradation. Requires Mg(2+) as cofactor.

The protein localises to the cell inner membrane. The protein resides in the cell outer membrane. It is found in the cytoplasm. Its subcellular location is the secreted. It localises to the cell surface. It catalyses the reaction (2R)-2-phosphoglycerate = phosphoenolpyruvate + H2O. The protein operates within carbohydrate degradation; glycolysis; pyruvate from D-glyceraldehyde 3-phosphate: step 4/5. Catalyzes the reversible conversion of 2-phosphoglycerate (2-PG) into phosphoenolpyruvate (PEP). It is essential for the degradation of carbohydrates via glycolysis. Its function is as follows. 'Moonlights' as a plasminogen receptor and plasmin activator. Binds host (human) plasminogen in vitro. Binds human plasmin and plasminogen on the cell surface; enhances the activity of host tissue-specific plasminogen activator (tPA). Plasmin bound to bacteria is partially protected from its physiological inhibitor alpha-2AP (SERPINF2). This Aeromonas hydrophila protein is Enolase.